A 383-amino-acid chain; its full sequence is MNTNKKILILTANYGNGHMQVAKTLYDECKSQGFEHVVVSNLYQESNPIVSEVTQYLYLKSFSIGKQFYRLFYYGVDKIYNKRKFNIYLKMGNKRLDELIQLHNPDIIIITFPMIVVPEYRNKTGKIIPTFNVMTDFCLHKIWVHENIDRYYVATDYVKQKLVEIGTHPSDVKVTGIPIRPQFEADVPKSKIYKKYGLSSNKKVLLIMAGAHGVLKNVKELCEALLLDSEVQIVVVCGKNAALKQSLSDLEQTHPDQLKALGYVEQIDELFRVTDCMITKPGGITLTEATALGVPVILYKPVPGQEKENAHFFEDYGAAIVINRHEDILESVTNLLQDEEKLESMKQNMKSLHLKHSSQTILEDIVEQSDLITNNKTYARALS.

Belongs to the glycosyltransferase 28 family. UgtP subfamily.

The protein localises to the cell membrane. It catalyses the reaction a 1,2-diacyl-3-O-(beta-D-glucopyranosyl)-sn-glycerol + UDP-alpha-D-glucose = a 1,2-diacyl-3-O-(beta-D-Glc-(1-&gt;6)-beta-D-Glc)-sn-glycerol + UDP + H(+). It carries out the reaction a 1,2-diacyl-3-O-(beta-D-Glc-(1-&gt;6)-beta-D-Glc)-sn-glycerol + UDP-alpha-D-glucose = a 1,2-diacyl-3-O-(beta-D-Glc-(1-&gt;6)-beta-D-Glc-(1-&gt;6)-beta-D-Glc)-sn-glycerol + UDP + H(+). The catalysed reaction is a 1,2-diacyl-sn-glycerol + UDP-alpha-D-glucose = a 1,2-diacyl-3-O-(beta-D-glucopyranosyl)-sn-glycerol + UDP + H(+). It functions in the pathway glycolipid metabolism; diglucosyl-diacylglycerol biosynthesis. Its function is as follows. Processive glucosyltransferase involved in the biosynthesis of both the bilayer- and non-bilayer-forming membrane glucolipids. Is able to successively transfer up to three glucosyl residues to diacylglycerol (DAG), thereby catalyzing the formation of beta-monoglucosyl-DAG (3-O-(beta-D-glucopyranosyl)-1,2-diacyl-sn-glycerol), beta-diglucosyl-DAG (3-O-(beta-D-glucopyranosyl-beta-(1-&gt;6)-D-glucopyranosyl)-1,2-diacyl-sn-glycerol) and beta-triglucosyl-DAG (3-O-(beta-D-glucopyranosyl-beta-(1-&gt;6)-D-glucopyranosyl-beta-(1-&gt;6)-D-glucopyranosyl)-1,2-diacyl-sn-glycerol). Beta-diglucosyl-DAG is the predominant glycolipid found in Bacillales and is also used as a membrane anchor for lipoteichoic acid (LTA). The polypeptide is Processive diacylglycerol beta-glucosyltransferase (Bacillus pumilus (strain SAFR-032)).